The primary structure comprises 372 residues: N-acetylneuraminate epimerase 1 (372 aa).

The signal sequence occupies residues 1 to 25; sequence MITMKVKNFIYLPFCLFIGTSVAGA. Kelch repeat units follow at residues 44-88, 90-141, 143-177, 178-223, 226-269, 291-340, and 342-371; these read KIYI…TIID, KIYV…FIHN, HAVS…KVNR, DYFS…IFAE, IYIL…VSGA, EKYS…PWQG, and MLIL…IKIV. Glu-232 (proton acceptor) is an active-site residue.

The protein belongs to the NanM family. In terms of assembly, homodimer.

Its subcellular location is the periplasm. It catalyses the reaction N-acetyl-alpha-neuraminate = N-acetyl-beta-neuraminate. Converts alpha-N-acetylneuranimic acid (Neu5Ac) to the beta-anomer, accelerating the equilibrium between the alpha- and beta-anomers. Probably facilitates sialidase-negative bacteria to compete successfully for limited amounts of extracellular Neu5Ac, which is likely taken up in the beta-anomer. In addition, the rapid removal of sialic acid from solution might be advantageous to the bacterium to damp down host responses. This is N-acetylneuraminate epimerase 1 from Escherichia coli O6:H1 (strain CFT073 / ATCC 700928 / UPEC).